The following is a 392-amino-acid chain: uncharacterized protein (392 aa).

The N-terminal 34 residues, 1 to 34, are a transit peptide targeting the mitochondrion; the sequence is MCISSSSLLCGINSLKYASNRVGILIPPFQTASS. The next 8 membrane-spanning stretches (helical) occupy residues 115 to 135, 150 to 172, 185 to 205, 208 to 225, 277 to 297, 299 to 319, 321 to 341, and 350 to 370; these read VAIMVAVIVCLVNGVVFWHWD, FRFMMTHAQASLFNLYEGRWWTL, LLVNCVAIYSFLSIVVYKFGV, ALSVYLGAGVFGNYVALQ, ATFVPQSWATGLLGASGAVYA, AAIFACLFPYTEFFLFFVYPV, AGIFMPLDFIAEYVLCLLNYE, and AHVSGTFFGVVSSLFLLPAMW. Catalysis depends on Ser292, which acts as the Nucleophile. The active site involves His351.

The protein belongs to the peptidase S54 family.

The protein localises to the mitochondrion inner membrane. This is an uncharacterized protein from Schizosaccharomyces pombe (strain 972 / ATCC 24843) (Fission yeast).